The following is a 92-amino-acid chain: MPSKKRAGNKKKGSQSNFAKLSIFQPNKYKFKKTCPLSAKGAPEVDYKNIRLLKKYMSENGKILPSRITNVSQKKQRELSLSIKRARNLALI.

It belongs to the bacterial ribosomal protein bS18 family. Part of the 30S ribosomal subunit. Forms a tight heterodimer with protein bS6.

Binds as a heterodimer with protein bS6 to the central domain of the 16S rRNA, where it helps stabilize the platform of the 30S subunit. The protein is Small ribosomal subunit protein bS18 of Pelagibacter ubique (strain HTCC1062).